Consider the following 258-residue polypeptide: UPF0246 protein CGSHiEE_07045 (258 aa).

The protein belongs to the UPF0246 family.

This is UPF0246 protein CGSHiEE_07045 from Haemophilus influenzae (strain PittEE).